The primary structure comprises 322 residues: Putative DNA-directed RNA polymerase subunit alpha-like 2 (322 aa).

Residues 1-232 (MSNPNNGAEW…GLLSLVFQAE (232 aa)) are alpha N-terminal domain (alpha-NTD). Residues 280 to 322 (EGPVTDEEGDSIDPTFTPVQKWDITMNSYQYSGETFQGLLSRF) are alpha C-terminal domain (alpha-CTD).

The protein belongs to the RNA polymerase alpha chain family. As to quaternary structure, in plastids the minimal PEP RNA polymerase catalytic core is composed of four subunits: alpha, beta, beta', and beta''. When a (nuclear-encoded) sigma factor is associated with the core the holoenzyme is formed, which can initiate transcription.

The protein resides in the plastid. Its subcellular location is the chloroplast. It catalyses the reaction RNA(n) + a ribonucleoside 5'-triphosphate = RNA(n+1) + diphosphate. Functionally, DNA-dependent RNA polymerase catalyzes the transcription of DNA into RNA using the four ribonucleoside triphosphates as substrates. This chain is Putative DNA-directed RNA polymerase subunit alpha-like 2 (rpoAL2-A), found in Pelargonium hortorum (Common geranium).